Consider the following 328-residue polypeptide: MALHDTYHDPVLAAEVVATLVQRSGIYVDGTLGGGSHSLALLQALQAQGLLESSLLIGIDQDSDALAMAAERLQAWQPYTRLLKGNFRDMASLVQQLCDAEGRACAVTGVLLDLGVSSFQLDTAERGFSYMRSGPLDMRMDNTAPLTAAELINHADEAELARIFYHYGEEPRSRALARAVVQQREKMGNFTTTEELAALVRRLTHGGEKAVIKTLSRLFQALRIAVNDELGALHEVLEGALELLDGNGRLAVMSYHSLEDRVVKHFFTHHAQCDWGPKGVALREPLSQGALTIVTKRPMLASADEIERNPRARSAKLRVAAKNQPKTI.

S-adenosyl-L-methionine contacts are provided by residues G35–H37, D60, F87, D113, and Q120.

The protein belongs to the methyltransferase superfamily. RsmH family.

The protein resides in the cytoplasm. It carries out the reaction cytidine(1402) in 16S rRNA + S-adenosyl-L-methionine = N(4)-methylcytidine(1402) in 16S rRNA + S-adenosyl-L-homocysteine + H(+). Its function is as follows. Specifically methylates the N4 position of cytidine in position 1402 (C1402) of 16S rRNA. The protein is Ribosomal RNA small subunit methyltransferase H of Chlorobium chlorochromatii (strain CaD3).